Reading from the N-terminus, the 179-residue chain is Large ribosomal subunit protein uL5 (179 aa).

Belongs to the universal ribosomal protein uL5 family. In terms of assembly, part of the 50S ribosomal subunit; part of the 5S rRNA/L5/L18/L25 subcomplex. Contacts the 5S rRNA and the P site tRNA. Forms a bridge to the 30S subunit in the 70S ribosome.

This is one of the proteins that bind and probably mediate the attachment of the 5S RNA into the large ribosomal subunit, where it forms part of the central protuberance. In the 70S ribosome it contacts protein S13 of the 30S subunit (bridge B1b), connecting the 2 subunits; this bridge is implicated in subunit movement. Contacts the P site tRNA; the 5S rRNA and some of its associated proteins might help stabilize positioning of ribosome-bound tRNAs. The polypeptide is Large ribosomal subunit protein uL5 (Stutzerimonas stutzeri (strain A1501) (Pseudomonas stutzeri)).